Here is a 98-residue protein sequence, read N- to C-terminus: Large ribosomal subunit protein eL21 (98 aa).

The interval 1-24 (MVKMSHGPRSGSRRKLTKSAEERK) is disordered.

It belongs to the eukaryotic ribosomal protein eL21 family.

The protein is Large ribosomal subunit protein eL21 (rpl21e) of Thermoplasma acidophilum (strain ATCC 25905 / DSM 1728 / JCM 9062 / NBRC 15155 / AMRC-C165).